Consider the following 176-residue polypeptide: Sec-independent protein translocase protein TatB (176 aa).

The chain crosses the membrane as a helical span at residues 1–21 (MLDLGLSKMALIGVVALVVLG). The segment at 155–176 (QSGAARVARHQPASLRRPTRFL) is disordered.

The protein belongs to the TatB family. As to quaternary structure, the Tat system comprises two distinct complexes: a TatABC complex, containing multiple copies of TatA, TatB and TatC subunits, and a separate TatA complex, containing only TatA subunits. Substrates initially bind to the TatABC complex, which probably triggers association of the separate TatA complex to form the active translocon.

The protein localises to the cell inner membrane. In terms of biological role, part of the twin-arginine translocation (Tat) system that transports large folded proteins containing a characteristic twin-arginine motif in their signal peptide across membranes. Together with TatC, TatB is part of a receptor directly interacting with Tat signal peptides. TatB may form an oligomeric binding site that transiently accommodates folded Tat precursor proteins before their translocation. The polypeptide is Sec-independent protein translocase protein TatB (Burkholderia ambifaria (strain ATCC BAA-244 / DSM 16087 / CCUG 44356 / LMG 19182 / AMMD) (Burkholderia cepacia (strain AMMD))).